Consider the following 161-residue polypeptide: Thy-1 membrane glycoprotein (161 aa).

Residues 1 to 19 (MNPVISITLLLSVLQMSRG) form the signal peptide. Q20 bears the Pyrrolidone carboxylic acid mark. Positions 20–126 (QRVISLTACL…NKTINVIRDK (107 aa)) constitute an Ig-like V-type domain. 2 disulfide bridges follow: C28–C130 and C38–C104. A glycan (N-linked (GlcNAc...) (complex) asparagine; alternate) is linked at N42. An N-linked (GlcNAc...) (high mannose) asparagine; alternate glycan is attached at N42. The N-linked (GlcNAc...) asparagine; alternate glycan is linked to N42. The residue at position 82 (S82) is a Phosphoserine. N93 carries an N-linked (GlcNAc...) (complex) asparagine; alternate glycan. A glycan (N-linked (GlcNAc...) asparagine; alternate) is linked at N93. N117 carries an N-linked (GlcNAc...) (high mannose) asparagine; in brain; alternate glycan. Residue N117 is glycosylated (N-linked (GlcNAc...) (hybrid) asparagine; in brain; alternate). C130 carries GPI-anchor amidated cysteine lipidation. A propeptide spans 131–161 (GGISLLVQNTSWLLLLLLSLSFLQATDFISL) (removed in mature form).

Glycosylation is tissue specific. Sialylation of N-glycans at Asn-93 in brain and at Asn-42, Asn-93 and Asn-117 in thymus. As to expression, abundant in lymphoid tissues.

The protein resides in the cell membrane. In terms of biological role, may play a role in cell-cell or cell-ligand interactions during synaptogenesis and other events in the brain. This chain is Thy-1 membrane glycoprotein (Thy1), found in Rattus norvegicus (Rat).